The following is a 293-amino-acid chain: Large ribosomal subunit protein uL2c (293 aa).

Residues valine 224–arginine 245 form a disordered region.

It belongs to the universal ribosomal protein uL2 family. In terms of assembly, part of the 50S ribosomal subunit.

The protein resides in the plastid. Its subcellular location is the chloroplast. The sequence is that of Large ribosomal subunit protein uL2c (rpl2) from Pyropia yezoensis (Susabi-nori).